Here is a 370-residue protein sequence, read N- to C-terminus: Neutral protease 2 homolog AFUA_4G13750 (370 aa).

The first 19 residues, 1–19, serve as a signal peptide directing secretion; that stretch reads MKVTILASAILALINGALA. Positions 20–172 are excised as a propeptide; it reads LPANTPTLDV…PQAIKLLDRR (153 aa). Cystine bridges form between Cys178–Cys250 and Cys257–Cys275. Position 300 (His300) interacts with Zn(2+). Glu301 is an active-site residue. Zn(2+)-binding residues include His304 and Asp315.

This sequence belongs to the peptidase M35 family. Zn(2+) serves as cofactor.

The protein localises to the secreted. It carries out the reaction Preferential cleavage of bonds with hydrophobic residues in P1'. Also 3-Asn-|-Gln-4 and 8-Gly-|-Ser-9 bonds in insulin B chain.. Secreted metalloproteinase that allows assimilation of proteinaceous substrates. Shows high activities on basic nuclear substrates such as histone and protamine. May be involved in virulence. The chain is Neutral protease 2 homolog AFUA_4G13750 from Aspergillus fumigatus (strain ATCC MYA-4609 / CBS 101355 / FGSC A1100 / Af293) (Neosartorya fumigata).